The chain runs to 347 residues: tRNA N6-adenosine threonylcarbamoyltransferase (347 aa).

His110 and His114 together coordinate Fe cation. Substrate is bound by residues 133–137, Asp168, Gly181, Asp185, and Asn277; that span reads VVSGG. Asp305 serves as a coordination point for Fe cation.

Belongs to the KAE1 / TsaD family. It depends on Fe(2+) as a cofactor.

The protein localises to the cytoplasm. It catalyses the reaction L-threonylcarbamoyladenylate + adenosine(37) in tRNA = N(6)-L-threonylcarbamoyladenosine(37) in tRNA + AMP + H(+). Its function is as follows. Required for the formation of a threonylcarbamoyl group on adenosine at position 37 (t(6)A37) in tRNAs that read codons beginning with adenine. Is involved in the transfer of the threonylcarbamoyl moiety of threonylcarbamoyl-AMP (TC-AMP) to the N6 group of A37, together with TsaE and TsaB. TsaD likely plays a direct catalytic role in this reaction. The chain is tRNA N6-adenosine threonylcarbamoyltransferase from Kineococcus radiotolerans (strain ATCC BAA-149 / DSM 14245 / SRS30216).